The following is a 233-amino-acid chain: Phosphoribosylformylglycinamidine synthase subunit PurQ (233 aa).

The 231-residue stretch at 3 to 233 (SAVLVFPGIN…GLAQHLAKAA (231 aa)) folds into the Glutamine amidotransferase type-1 domain. C87 acts as the Nucleophile in catalysis. Residues H204 and E206 contribute to the active site.

In terms of assembly, part of the FGAM synthase complex composed of 1 PurL, 1 PurQ and 2 PurS subunits.

It localises to the cytoplasm. The catalysed reaction is N(2)-formyl-N(1)-(5-phospho-beta-D-ribosyl)glycinamide + L-glutamine + ATP + H2O = 2-formamido-N(1)-(5-O-phospho-beta-D-ribosyl)acetamidine + L-glutamate + ADP + phosphate + H(+). It catalyses the reaction L-glutamine + H2O = L-glutamate + NH4(+). It participates in purine metabolism; IMP biosynthesis via de novo pathway; 5-amino-1-(5-phospho-D-ribosyl)imidazole from N(2)-formyl-N(1)-(5-phospho-D-ribosyl)glycinamide: step 1/2. Functionally, part of the phosphoribosylformylglycinamidine synthase complex involved in the purines biosynthetic pathway. Catalyzes the ATP-dependent conversion of formylglycinamide ribonucleotide (FGAR) and glutamine to yield formylglycinamidine ribonucleotide (FGAM) and glutamate. The FGAM synthase complex is composed of three subunits. PurQ produces an ammonia molecule by converting glutamine to glutamate. PurL transfers the ammonia molecule to FGAR to form FGAM in an ATP-dependent manner. PurS interacts with PurQ and PurL and is thought to assist in the transfer of the ammonia molecule from PurQ to PurL. The sequence is that of Phosphoribosylformylglycinamidine synthase subunit PurQ from Rhodopseudomonas palustris (strain ATCC BAA-98 / CGA009).